Consider the following 214-residue polypeptide: MSTLASSASVFLVHPPLPPSPPQAGNHSYLTTLGFGYSIAIALGFLVLLSTVLLSSYICCRDSRRRTTAVESTGDRGGSVILPRIIFVAEEDNEDLEAGDVVVGLDQAVINSYPKFHFSKDTSAASSDGFGGGGDTTCSICLCEYKEAEMLRMMPECKHYFHLCCLDAWLKLNGSCPVCRNSPLPTPTSTPLSTPLSEVVPLSQYAADRRRARR.

Residues 33-53 (LGFGYSIAIALGFLVLLSTVL) traverse the membrane as a helical segment. The RING-type; atypical zinc finger occupies 138-180 (CSICLCEYKEAEMLRMMPECKHYFHLCCLDAWLKLNGSCPVCR).

It belongs to the RING-type zinc finger family. ATL subfamily.

It is found in the membrane. It catalyses the reaction S-ubiquitinyl-[E2 ubiquitin-conjugating enzyme]-L-cysteine + [acceptor protein]-L-lysine = [E2 ubiquitin-conjugating enzyme]-L-cysteine + N(6)-ubiquitinyl-[acceptor protein]-L-lysine.. The protein operates within protein modification; protein ubiquitination. The chain is RING-H2 finger protein ATL67 (ATL67) from Arabidopsis thaliana (Mouse-ear cress).